Reading from the N-terminus, the 335-residue chain is Agamous-like MADS-box protein AGL104 (335 aa).

The 61-residue stretch at 1-61 (MGRVKLEIKR…DRLSLFSGKT (61 aa)) folds into the MADS-box domain. Residues 124–151 (SDVEELEHEVCRLQQQLQMAEEELRRYE) are a coiled coil. The tract at residues 302 to 335 (MPAQQSDIPGVTAETQVDHEVSDYETKVPQLSSQ) is disordered. The segment covering 317-327 (QVDHEVSDYET) has biased composition (basic and acidic residues).

Forms heterodimers with AGL30 and AGL65. Expressed in pollen.

It is found in the nucleus. Functionally, probable transcription factor that forms heterodimers with the MADS-box proteins AGL30 and AGL65 and is involved in the regulation of pollen maturation at the late stages of pollen development and pollen tube growth. The chain is Agamous-like MADS-box protein AGL104 from Arabidopsis thaliana (Mouse-ear cress).